Reading from the N-terminus, the 405-residue chain is Deoxyguanosinetriphosphate triphosphohydrolase-like protein (405 aa).

Residues 75-219 (RLTHTIEVAQ…AAIADDIAYN (145 aa)) form the HD domain.

The protein belongs to the dGTPase family. Type 2 subfamily.

In Agrobacterium fabrum (strain C58 / ATCC 33970) (Agrobacterium tumefaciens (strain C58)), this protein is Deoxyguanosinetriphosphate triphosphohydrolase-like protein.